A 959-amino-acid chain; its full sequence is Atromentin synthetase invA1 (959 aa).

The tract at residues 59-466 (DSSIQTKTFS…SGRIKETVIV (408 aa)) is adenylation (A) domain. Residues 598 to 676 (TPQTETEQTL…SLANYIVALK (79 aa)) enclose the Carrier domain. The tract at residues 603 to 673 (TEQTLAAIYA…VVSSLANYIV (71 aa)) is thiolation and peptide carrier (T) domain. Ser635 is subject to O-(pantetheine 4'-phosphoryl)serine. The segment at 699-946 (PIFMVHPGVG…LMDFDHVPGF (248 aa)) is thioesterase (TE) domain.

This sequence belongs to the ATP-dependent AMP-binding enzyme family.

It participates in secondary metabolite biosynthesis. Its function is as follows. An L-tyrosine:2-oxoglutarate aminotransferase (probably invD) and atromentin synthetase invA1 catalyze consecutive steps to turn over L-tyrosine into atromentin, which represents the generic precursor molecule for the entire terphenylquinone and pulvinic acid family of pigments, which are widely distributed secondary metabolites in homobasidiomycetes. The first step catalyzed by the aminotransferase converts L-tyrosine in to 4-hydroxyphenylpyruvate (4-HPP). Adenylation of two 4-HPP monomers by the invA1 adenylation (A) domain, covalent tethering of the monomers as a thioester and oxoester onto the invA1 thiolation (T) and thioesterase (TE) domains, respectively, and symmetric C-C-bond formation between two monomers catalyzed by the invA1 TE domain leads to atromentin. In Paxillus involutus (Naked brimcap), this protein is Atromentin synthetase invA1 (invA1).